The sequence spans 502 residues: DnaJ homolog subfamily C member 3 homolog (502 aa).

The first 25 residues, 1-25 (MIVNKKYFLLICIIILISINCLVLA), serve as a signal peptide directing secretion. TPR repeat units follow at residues 29–62 (IENFLKEGDDLVSKGKYDLANENYSNAIDLIGSD), 69–102 (VSLLFKRAGIYHQKGKNILALSDLNRAIEANPDN), 103–136 (IHARLKRAKIQSSLGRFEEAMDEYKRVLKIRPDN), 184–217 (KEVRLMLCECFFQQGDHRKVLDETMTILKSEPSS), 218–251 (VAALYWRGKTFFSMGEKEIAMKFLKEGLKFDPDN), 264–297 (FEKSTANAQELFNQQKYQDALGQIEDALEIEPNS), 302–335 (TPLYLLKCKCLLKVKKGKESIEACNRALELDELN), and 336–369 (ADALYNRAEAYMYEEDYQKALNDYNKAREHKPND). The N-linked (GlcNAc...) asparagine glycan is linked to asparagine 51. Cysteine 309 and cysteine 325 are joined by a disulfide. One can recognise a J domain in the interval 390–457 (DYYKILGIQK…EKRKRYDMGE (68 aa)).

The protein resides in the secreted. It localises to the endoplasmic reticulum lumen. Its function is as follows. May be involved in the unfolded protein response (UPR) during ER stress. The protein is DnaJ homolog subfamily C member 3 homolog (dnajc3) of Dictyostelium discoideum (Social amoeba).